A 255-amino-acid polypeptide reads, in one-letter code: Pyrroloquinoline-quinone synthase (255 aa).

It belongs to the PqqC family.

The enzyme catalyses 6-(2-amino-2-carboxyethyl)-7,8-dioxo-1,2,3,4,7,8-hexahydroquinoline-2,4-dicarboxylate + 3 O2 = pyrroloquinoline quinone + 2 H2O2 + 2 H2O + H(+). It participates in cofactor biosynthesis; pyrroloquinoline quinone biosynthesis. Ring cyclization and eight-electron oxidation of 3a-(2-amino-2-carboxyethyl)-4,5-dioxo-4,5,6,7,8,9-hexahydroquinoline-7,9-dicarboxylic-acid to PQQ. The polypeptide is Pyrroloquinoline-quinone synthase (Cereibacter sphaeroides (strain ATCC 17029 / ATH 2.4.9) (Rhodobacter sphaeroides)).